The chain runs to 577 residues: Arginine--tRNA ligase (577 aa).

The 'HIGH' region motif lies at 122–132 (PNVAKEMHVGH).

This sequence belongs to the class-I aminoacyl-tRNA synthetase family. In terms of assembly, monomer.

Its subcellular location is the cytoplasm. It carries out the reaction tRNA(Arg) + L-arginine + ATP = L-arginyl-tRNA(Arg) + AMP + diphosphate. The sequence is that of Arginine--tRNA ligase from Salmonella paratyphi B (strain ATCC BAA-1250 / SPB7).